The sequence spans 147 residues: Large ribosomal subunit protein bL9 (147 aa).

It belongs to the bacterial ribosomal protein bL9 family.

In terms of biological role, binds to the 23S rRNA. In Shouchella clausii (strain KSM-K16) (Alkalihalobacillus clausii), this protein is Large ribosomal subunit protein bL9.